The sequence spans 381 residues: Acetylornithine deacetylase (381 aa).

His79 is a Zn(2+) binding site. Residue Asp81 is part of the active site. Asp111 serves as a coordination point for Zn(2+). Glu143 is a catalytic residue. Zn(2+)-binding residues include Glu144, Glu168, and His354.

It belongs to the peptidase M20A family. ArgE subfamily. Homodimer. It depends on Zn(2+) as a cofactor. Requires Co(2+) as cofactor. Glutathione serves as cofactor.

Its subcellular location is the cytoplasm. It carries out the reaction N(2)-acetyl-L-ornithine + H2O = L-ornithine + acetate. It participates in amino-acid biosynthesis; L-arginine biosynthesis; L-ornithine from N(2)-acetyl-L-ornithine (linear): step 1/1. Functionally, catalyzes the hydrolysis of the amide bond of N(2)-acetylated L-amino acids. Cleaves the acetyl group from N-acetyl-L-ornithine to form L-ornithine, an intermediate in L-arginine biosynthesis pathway, and a branchpoint in the synthesis of polyamines. This Buchnera aphidicola subsp. Acyrthosiphon pisum (strain APS) (Acyrthosiphon pisum symbiotic bacterium) protein is Acetylornithine deacetylase.